The primary structure comprises 449 residues: Phosphoglucosamine mutase (449 aa).

Ser-102 functions as the Phosphoserine intermediate in the catalytic mechanism. Positions 102, 243, 245, and 247 each coordinate Mg(2+). Ser-102 is subject to Phosphoserine.

This sequence belongs to the phosphohexose mutase family. Requires Mg(2+) as cofactor. Post-translationally, activated by phosphorylation.

The enzyme catalyses alpha-D-glucosamine 1-phosphate = D-glucosamine 6-phosphate. In terms of biological role, catalyzes the conversion of glucosamine-6-phosphate to glucosamine-1-phosphate. This Maricaulis maris (strain MCS10) (Caulobacter maris) protein is Phosphoglucosamine mutase.